Consider the following 765-residue polypeptide: Polyribonucleotide nucleotidyltransferase (765 aa).

Mg(2+) contacts are provided by Asp-556 and Asp-562. The KH domain occupies 622–681 (PRITKISIPQNKIGEVIGPKGKTINQITEETGANISIEDDGTVFVSAVGGEAAEAAIEKI). An S1 motif domain is found at 693–762 (GDRFLGTVVK…NRGKISLVPV (70 aa)).

The protein belongs to the polyribonucleotide nucleotidyltransferase family. The cofactor is Mg(2+).

The protein localises to the cytoplasm. It catalyses the reaction RNA(n+1) + phosphate = RNA(n) + a ribonucleoside 5'-diphosphate. In terms of biological role, involved in mRNA degradation. Catalyzes the phosphorolysis of single-stranded polyribonucleotides processively in the 3'- to 5'-direction. The sequence is that of Polyribonucleotide nucleotidyltransferase from Corynebacterium urealyticum (strain ATCC 43042 / DSM 7109).